Consider the following 492-residue polypeptide: Zinc finger protein 385B (492 aa).

Matrin-type zinc fingers lie at residues 8-44 (KKLL…VKQL) and 143-173 (ISCN…KLKA). The interval 159–206 (EAHYKGSKHAKKLKAQESPKNKQKSAVAQDSGTKTITSTSTNTTTTTT) is disordered. The segment covering 189–206 (SGTKTITSTSTNTTTTTT) has biased composition (low complexity). 2 Matrin-type zinc fingers span residues 303-337 (KKLL…LEAR) and 371-401 (FHCE…RVAG). Residues 388–420 (QHISSRRHKDRVAGKPTKPKYSPYNKQQRSSSS) form a disordered region.

It localises to the nucleus. In terms of biological role, may play a role in p53/TP53-mediated apoptosis. The polypeptide is Zinc finger protein 385B (znf385b) (Danio rerio (Zebrafish)).